The chain runs to 113 residues: Hydrogenase maturation factor HypA (113 aa).

A Ni(2+)-binding site is contributed by His2. Cys73, Cys76, Cys89, and Cys92 together coordinate Zn(2+).

Belongs to the HypA/HybF family.

Functionally, involved in the maturation of [NiFe] hydrogenases. Required for nickel insertion into the metal center of the hydrogenase. The sequence is that of Hydrogenase maturation factor HypA from Moorella thermoacetica (strain ATCC 39073 / JCM 9320).